The sequence spans 362 residues: Alkanal monooxygenase alpha chain (362 aa).

Belongs to the bacterial luciferase oxidoreductase family. As to quaternary structure, heterodimer of an alpha and a beta chain.

It catalyses the reaction a long-chain fatty aldehyde + FMNH2 + O2 = a long-chain fatty acid + hnu + FMN + H2O + 2 H(+). Functionally, light-emitting reaction in luminous bacteria. The polypeptide is Alkanal monooxygenase alpha chain (luxA) (Photorhabdus luminescens (Xenorhabdus luminescens)).